A 435-amino-acid chain; its full sequence is Rho GTPase-activating protein 4 (435 aa).

Positions 1–59 (MAKVLKSSQSCHFPSPSSSSSTSCGGGNDGSNRDPHSPFNISRREEEEEEEERSEKERE) are disordered. Residues 7-23 (SSQSCHFPSPSSSSSTS) are compositionally biased toward low complexity. The CRIB domain maps to 93–106 (IGVPTDVRHVAHVT). In terms of domain architecture, Rho-GAP spans 138-319 (VSTESMQLSY…LIVKTLKDRK (182 aa)). The tract at residues 321–343 (SRDKLVPASNPSPRDHNGDQSSS) is disordered.

Acts as a GTPase activator for the Rac-type GTPase by converting it to an inactive GDP-bound state. Acts as a negative feedback regulator in tolerance to oxygen deprivation which requires ARAC4/ROP2. In Arabidopsis thaliana (Mouse-ear cress), this protein is Rho GTPase-activating protein 4 (ROPGAP4).